A 24-amino-acid chain; its full sequence is Brevinin-1Bb (24 aa).

C18 and C24 are oxidised to a cystine.

In terms of tissue distribution, expressed by the skin glands.

The protein localises to the secreted. Its function is as follows. Antibacterial activity against Gram-positive bacterium S.aureus and Gram-negative bacterium E.coli. Has activity against C.albicans. This Lithobates berlandieri (Rio Grande leopard frog) protein is Brevinin-1Bb.